Reading from the N-terminus, the 300-residue chain is Geranylgeranyl diphosphate synthase (300 aa).

Isopentenyl diphosphate contacts are provided by Lys-50, Arg-53, and His-82. 2 residues coordinate Mg(2+): Asp-89 and Asp-95. Residue Arg-100 participates in (2E,6E)-farnesyl diphosphate binding. Arg-101 is a binding site for isopentenyl diphosphate. (2E,6E)-farnesyl diphosphate is bound by residues Lys-186, Thr-187, and Gln-224.

It belongs to the FPP/GGPP synthase family. Mg(2+) serves as cofactor.

It is found in the plastid. Its subcellular location is the cyanelle. It catalyses the reaction isopentenyl diphosphate + (2E,6E)-farnesyl diphosphate = (2E,6E,10E)-geranylgeranyl diphosphate + diphosphate. The protein operates within isoprenoid biosynthesis; geranylgeranyl diphosphate biosynthesis; geranylgeranyl diphosphate from farnesyl diphosphate and isopentenyl diphosphate: step 1/1. Functionally, catalyzes the condensation of farnesyl diphosphate (FPP) and isopentenyl diphosphate (IPP) to yield geranylgeranyl diphosphate (GGPP) needed for biosynthesis of carotenoids and diterpenes. This is Geranylgeranyl diphosphate synthase (crtE) from Cyanophora paradoxa.